The following is a 522-amino-acid chain: Aspartic and glutamic acid-rich protein (522 aa).

The N-terminal stretch at 1-16 (MKVFVYLLVTFSLTNA) is a signal peptide. 2 stretches are compositionally biased toward basic and acidic residues: residues 72–81 (YDDFFPKDTS) and 93–102 (SRNDDGYDLA). The tract at residues 72–497 (YDDFFPKDTS…KSKDAAQGNI (426 aa)) is disordered. Positions 109 to 125 (DDEEAYDDFDEVDDRAD) are enriched in acidic residues. Basic and acidic residues predominate over residues 142–152 (KLPAEEESKND). Composition is skewed to acidic residues over residues 153-166 (MDEE…EEDK), 173-200 (FAED…EDEV), 228-261 (DNEE…DESD), and 267-283 (EVED…TEEG). Basic and acidic residues predominate over residues 284–343 (SEIKQNDETEEQPEKKFDADKEHEDAPEPLKEKLSDESKARAEDESDKSEDAAKEIKEPE). Residues 319–465 (DESKARAEDE…KSNLALKRDE (147 aa)) adopt a coiled-coil conformation. The span at 358–374 (DEAELLDDEAELSDDEA) shows a compositional bias: acidic residues. Basic and acidic residues-rich tracts occupy residues 375–397 (ELSK…KAEK), 407–453 (DEAK…EFAK), and 461–491 (LKRD…KSKD).

In terms of tissue distribution, component of the acid-soluble organic matrix of the aragonitic skeleton (at protein level).

It is found in the secreted. In Acropora millepora (Staghorn coral), this protein is Aspartic and glutamic acid-rich protein.